A 479-amino-acid polypeptide reads, in one-letter code: ATP synthase subunit beta (479 aa).

153 to 160 (GGAGVGKT) lines the ATP pocket.

This sequence belongs to the ATPase alpha/beta chains family. F-type ATPases have 2 components, CF(1) - the catalytic core - and CF(0) - the membrane proton channel. CF(1) has five subunits: alpha(3), beta(3), gamma(1), delta(1), epsilon(1). CF(0) has three main subunits: a(1), b(2) and c(9-12). The alpha and beta chains form an alternating ring which encloses part of the gamma chain. CF(1) is attached to CF(0) by a central stalk formed by the gamma and epsilon chains, while a peripheral stalk is formed by the delta and b chains.

The protein resides in the cell membrane. The enzyme catalyses ATP + H2O + 4 H(+)(in) = ADP + phosphate + 5 H(+)(out). Functionally, produces ATP from ADP in the presence of a proton gradient across the membrane. The catalytic sites are hosted primarily by the beta subunits. The polypeptide is ATP synthase subunit beta (Lactobacillus helveticus (strain DPC 4571)).